The primary structure comprises 572 residues: Proline--tRNA ligase (572 aa).

This sequence belongs to the class-II aminoacyl-tRNA synthetase family. ProS type 1 subfamily. Homodimer.

The protein resides in the cytoplasm. The enzyme catalyses tRNA(Pro) + L-proline + ATP = L-prolyl-tRNA(Pro) + AMP + diphosphate. Its function is as follows. Catalyzes the attachment of proline to tRNA(Pro) in a two-step reaction: proline is first activated by ATP to form Pro-AMP and then transferred to the acceptor end of tRNA(Pro). As ProRS can inadvertently accommodate and process non-cognate amino acids such as alanine and cysteine, to avoid such errors it has two additional distinct editing activities against alanine. One activity is designated as 'pretransfer' editing and involves the tRNA(Pro)-independent hydrolysis of activated Ala-AMP. The other activity is designated 'posttransfer' editing and involves deacylation of mischarged Ala-tRNA(Pro). The misacylated Cys-tRNA(Pro) is not edited by ProRS. This chain is Proline--tRNA ligase, found in Escherichia coli O7:K1 (strain IAI39 / ExPEC).